A 35-amino-acid polypeptide reads, in one-letter code: Conotoxin Cal6.1d (35 aa).

The propeptide occupies 1–8; it reads GLTRPSKR. Disulfide bonds link Cys9–Cys25, Cys16–Cys29, and Cys24–Cys34.

The protein belongs to the conotoxin O1 superfamily. As to expression, expressed by the venom duct.

The protein resides in the secreted. Its function is as follows. Probable neurotoxin with unknown target. Possibly targets ion channels. The polypeptide is Conotoxin Cal6.1d (Californiconus californicus (California cone)).